Here is a 247-residue protein sequence, read N- to C-terminus: Probable transcriptional regulatory protein GM21_0933 (247 aa).

Belongs to the TACO1 family.

The protein resides in the cytoplasm. The chain is Probable transcriptional regulatory protein GM21_0933 from Geobacter sp. (strain M21).